The following is a 365-amino-acid chain: Phospho-N-acetylmuramoyl-pentapeptide-transferase (365 aa).

A run of 9 helical transmembrane segments spans residues 47-67 (LLAL…VVPL), 92-112 (PTMG…ILAG), 114-134 (SPLV…GWLD), 153-173 (LCLQ…QQGW), 180-200 (ITLP…LAVF), 215-235 (LDGL…LWLA), 239-259 (PAIA…LLHN), 281-301 (AIAI…LFVL), and 344-364 (TQVV…CWLL).

This sequence belongs to the glycosyltransferase 4 family. MraY subfamily. Requires Mg(2+) as cofactor.

The protein localises to the cell inner membrane. The enzyme catalyses UDP-N-acetyl-alpha-D-muramoyl-L-alanyl-gamma-D-glutamyl-meso-2,6-diaminopimeloyl-D-alanyl-D-alanine + di-trans,octa-cis-undecaprenyl phosphate = di-trans,octa-cis-undecaprenyl diphospho-N-acetyl-alpha-D-muramoyl-L-alanyl-D-glutamyl-meso-2,6-diaminopimeloyl-D-alanyl-D-alanine + UMP. It functions in the pathway cell wall biogenesis; peptidoglycan biosynthesis. Catalyzes the initial step of the lipid cycle reactions in the biosynthesis of the cell wall peptidoglycan: transfers peptidoglycan precursor phospho-MurNAc-pentapeptide from UDP-MurNAc-pentapeptide onto the lipid carrier undecaprenyl phosphate, yielding undecaprenyl-pyrophosphoryl-MurNAc-pentapeptide, known as lipid I. The polypeptide is Phospho-N-acetylmuramoyl-pentapeptide-transferase (Synechococcus elongatus (strain ATCC 33912 / PCC 7942 / FACHB-805) (Anacystis nidulans R2)).